The primary structure comprises 380 residues: Outer membrane protein assembly factor BamB (380 aa).

A signal peptide spans 1–18 (MVQWKHAALLALALAVVG). Cysteine 19 carries N-palmitoyl cysteine lipidation. Cysteine 19 carries the S-diacylglycerol cysteine lipid modification.

Belongs to the BamB family. As to quaternary structure, part of the Bam complex.

The protein localises to the cell outer membrane. Its function is as follows. Part of the outer membrane protein assembly complex, which is involved in assembly and insertion of beta-barrel proteins into the outer membrane. The chain is Outer membrane protein assembly factor BamB from Pseudomonas aeruginosa (strain ATCC 15692 / DSM 22644 / CIP 104116 / JCM 14847 / LMG 12228 / 1C / PRS 101 / PAO1).